A 1892-amino-acid chain; its full sequence is Alpha-2-macroglobulin (1892 aa).

A signal peptide spans 1–23; it reads MKNIFRKFVFTIFVCLINLQLIA. The segment at residues 1441 to 1444 is a cross-link (isoglutamyl cysteine thioester (Cys-Gln)); sequence CTEQ.

This sequence belongs to the protease inhibitor I39 (alpha-2-macroglobulin) family. Bacterial alpha-2-macroglobulin subfamily.

Its function is as follows. Protects the bacterial cell from host peptidases. The sequence is that of Alpha-2-macroglobulin from Rickettsia conorii (strain ATCC VR-613 / Malish 7).